A 293-amino-acid polypeptide reads, in one-letter code: ATP phosphoribosyltransferase (293 aa).

Belongs to the ATP phosphoribosyltransferase family. Long subfamily. Mg(2+) serves as cofactor.

The protein localises to the cytoplasm. The catalysed reaction is 1-(5-phospho-beta-D-ribosyl)-ATP + diphosphate = 5-phospho-alpha-D-ribose 1-diphosphate + ATP. Its pathway is amino-acid biosynthesis; L-histidine biosynthesis; L-histidine from 5-phospho-alpha-D-ribose 1-diphosphate: step 1/9. Feedback inhibited by histidine. Its function is as follows. Catalyzes the condensation of ATP and 5-phosphoribose 1-diphosphate to form N'-(5'-phosphoribosyl)-ATP (PR-ATP). Has a crucial role in the pathway because the rate of histidine biosynthesis seems to be controlled primarily by regulation of HisG enzymatic activity. The polypeptide is ATP phosphoribosyltransferase (Solidesulfovibrio magneticus (strain ATCC 700980 / DSM 13731 / RS-1) (Desulfovibrio magneticus)).